Here is a 608-residue protein sequence, read N- to C-terminus: Elongation factor 4 (608 aa).

Residues 11-193 (KKIRNFSIIA…QIVEKVPEPS (183 aa)) enclose the tr-type G domain. GTP contacts are provided by residues 23 to 28 (DHGKST) and 140 to 143 (NKID).

Belongs to the TRAFAC class translation factor GTPase superfamily. Classic translation factor GTPase family. LepA subfamily.

It is found in the cell membrane. It carries out the reaction GTP + H2O = GDP + phosphate + H(+). Its function is as follows. Required for accurate and efficient protein synthesis under certain stress conditions. May act as a fidelity factor of the translation reaction, by catalyzing a one-codon backward translocation of tRNAs on improperly translocated ribosomes. Back-translocation proceeds from a post-translocation (POST) complex to a pre-translocation (PRE) complex, thus giving elongation factor G a second chance to translocate the tRNAs correctly. Binds to ribosomes in a GTP-dependent manner. In Listeria monocytogenes serotype 4b (strain CLIP80459), this protein is Elongation factor 4.